The sequence spans 257 residues: Zinc transporter ZupT (257 aa).

The next 8 membrane-spanning stretches (helical) occupy residues 5 to 25 (LILTLLAGAATFIGAILGVIG), 32 to 52 (VLAFSLGFAAGIMLLISLMEM), 61 to 81 (GMSPVMGYGMFVVGLLGYFAL), 109 to 129 (AILLTLGISLHNFPEGVATYV), 137 to 157 (LGFGIALAVALHNIPEGLAVA), 171 to 191 (ILWAGISGLAEILGGVLTWLI), 195 to 215 (MISPVVMAAIMAAVAGIMVAL), and 236 to 256 (GVLCGMSVMGLSLVLLQTAGF). Fe(2+) contacts are provided by asparagine 120 and glutamate 123. Zn(2+) contacts are provided by glutamate 123 and histidine 148. Fe(2+)-binding residues include asparagine 149, glutamate 152, and glutamate 181. A Zn(2+)-binding site is contributed by glutamate 152.

It belongs to the ZIP transporter (TC 2.A.5) family. ZupT subfamily.

It localises to the cell inner membrane. The enzyme catalyses Zn(2+)(in) = Zn(2+)(out). Mediates zinc uptake. May also transport other divalent cations. This is Zinc transporter ZupT from Enterobacter sp. (strain 638).